We begin with the raw amino-acid sequence, 20 residues long: L-amino-acid oxidase L1 (20 aa).

Belongs to the flavin monoamine oxidase family. FIG1 subfamily. Monomer. This is in contrast with most of its orthologs, that are non-covalently linked homodimers. It depends on FAD as a cofactor. N-glycosylated. In terms of tissue distribution, expressed by the venom gland.

The protein resides in the secreted. It catalyses the reaction an L-alpha-amino acid + O2 + H2O = a 2-oxocarboxylate + H2O2 + NH4(+). The enzyme catalyses L-leucine + O2 + H2O = 4-methyl-2-oxopentanoate + H2O2 + NH4(+). It carries out the reaction L-phenylalanine + O2 + H2O = 3-phenylpyruvate + H2O2 + NH4(+). The catalysed reaction is L-tryptophan + O2 + H2O = indole-3-pyruvate + H2O2 + NH4(+). It catalyses the reaction L-methionine + O2 + H2O = 4-methylsulfanyl-2-oxobutanoate + H2O2 + NH4(+). The enzyme catalyses L-isoleucine + O2 + H2O = (S)-3-methyl-2-oxopentanoate + H2O2 + NH4(+). It carries out the reaction L-tyrosine + O2 + H2O = 3-(4-hydroxyphenyl)pyruvate + H2O2 + NH4(+). Its function is as follows. Catalyzes an oxidative deamination of predominantly hydrophobic and aromatic L-amino acids, thus producing hydrogen peroxide that may contribute to the diverse toxic effects of this enzyme. Is active on L-Met, L-Ile, L-Leu, L-Phe, L-Trp, and L-Tyr. Exhibits diverse biological activities, such as hemorrhage, hemolysis, edema, apoptosis of vascular endothelial cells or tumor cell lines, antibacterial and antiparasitic activities, as well as regulation of platelet aggregation. Its effect on platelets is controversial, since it either induces aggregation or inhibits agonist-induced aggregation. These different effects are probably due to different experimental conditions. The chain is L-amino-acid oxidase L1 from Daboia russelii (Russel's viper).